We begin with the raw amino-acid sequence, 187 residues long: Ubiquinone biosynthesis protein COQ4 homolog, mitochondrial (187 aa).

His77, Asp78, His81, and Glu93 together coordinate Zn(2+).

Belongs to the COQ4 family. Component of a multi-subunit COQ enzyme complex. Zn(2+) is required as a cofactor.

The protein localises to the mitochondrion inner membrane. The catalysed reaction is a 4-hydroxy-3-methoxy-5-(all-trans-polyprenyl)benzoate + H(+) = a 2-methoxy-6-(all-trans-polyprenyl)phenol + CO2. It functions in the pathway cofactor biosynthesis; ubiquinone biosynthesis. Its function is as follows. Lyase that catalyzes the C1-decarboxylation of 4-hydroxy-3-methoxy-5-(all-trans-polyprenyl)benzoic acid into 2-methoxy-6-(all-trans-polyprenyl)phenol during ubiquinone biosynthesis. The chain is Ubiquinone biosynthesis protein COQ4 homolog, mitochondrial from Leishmania major.